A 126-amino-acid polypeptide reads, in one-letter code: Ribosome-binding factor A (126 aa).

It belongs to the RbfA family. Monomer. Binds 30S ribosomal subunits, but not 50S ribosomal subunits or 70S ribosomes.

It localises to the cytoplasm. One of several proteins that assist in the late maturation steps of the functional core of the 30S ribosomal subunit. Associates with free 30S ribosomal subunits (but not with 30S subunits that are part of 70S ribosomes or polysomes). Required for efficient processing of 16S rRNA. May interact with the 5'-terminal helix region of 16S rRNA. The polypeptide is Ribosome-binding factor A (Geobacillus sp. (strain WCH70)).